Here is a 299-residue protein sequence, read N- to C-terminus: ATP phosphoribosyltransferase (299 aa).

The protein belongs to the ATP phosphoribosyltransferase family. Long subfamily. It depends on Mg(2+) as a cofactor.

It is found in the cytoplasm. The catalysed reaction is 1-(5-phospho-beta-D-ribosyl)-ATP + diphosphate = 5-phospho-alpha-D-ribose 1-diphosphate + ATP. Its pathway is amino-acid biosynthesis; L-histidine biosynthesis; L-histidine from 5-phospho-alpha-D-ribose 1-diphosphate: step 1/9. Feedback inhibited by histidine. Functionally, catalyzes the condensation of ATP and 5-phosphoribose 1-diphosphate to form N'-(5'-phosphoribosyl)-ATP (PR-ATP). Has a crucial role in the pathway because the rate of histidine biosynthesis seems to be controlled primarily by regulation of HisG enzymatic activity. This chain is ATP phosphoribosyltransferase, found in Shewanella woodyi (strain ATCC 51908 / MS32).